Reading from the N-terminus, the 142-residue chain is Immunoglobulin omega chain (142 aa).

An N-terminal signal peptide occupies residues 1 to 19; sequence MAWTSVLLMLLAHLTGCGP. The framework-1 stretch occupies residues 20-41; that stretch reads QPMVHQPPSASSSLGATIRLSC. Cysteines 41 and 115 form a disulfide. The complementarity-determining-1 stretch occupies residues 42–56; the sequence is TLSNDHNIGIYSIYW. The framework-2 stretch occupies residues 57–70; sequence YQQRPGHPPRFLLR. Residues 71-81 form a complementarity-determining-2 region; it reads YFSHSDKHQGP. The interval 82–115 is framework-3; sequence DIPPRFSGSKDTARNLGYLSISELQPEDEAVYYC.

It belongs to the immunoglobulin superfamily. In terms of tissue distribution, only expressed by pre-B-cells.

In terms of biological role, associates with the Ig-mu chain to form a molecular complex that is expressed on the surface of pre-B-cells. This complex presumably regulates Ig gene rearrangements in the early steps of B-cell differentiation. This Mus musculus (Mouse) protein is Immunoglobulin omega chain.